The sequence spans 347 residues: Ribosomal RNA small subunit methyltransferase C (347 aa).

The protein belongs to the methyltransferase superfamily. RsmC family. Monomer.

It localises to the cytoplasm. It catalyses the reaction guanosine(1207) in 16S rRNA + S-adenosyl-L-methionine = N(2)-methylguanosine(1207) in 16S rRNA + S-adenosyl-L-homocysteine + H(+). Specifically methylates the guanine in position 1207 of 16S rRNA in the 30S particle. The protein is Ribosomal RNA small subunit methyltransferase C of Shewanella baltica (strain OS195).